A 160-amino-acid polypeptide reads, in one-letter code: Putative antiporter subunit mnhE2 (160 aa).

The next 3 helical transmembrane spans lie at 23–43, 55–75, and 100–120; these read FKFT…YILH, IWVA…SSIS, and SNWA…STVI.

This sequence belongs to the CPA3 antiporters (TC 2.A.63) subunit E family. In terms of assembly, may form a heterooligomeric complex that consists of seven subunits: mnhA2, mnhB2, mnhC2, mnhD2, mnhE2, mnhF2 and mnhG2.

The protein localises to the cell membrane. This is Putative antiporter subunit mnhE2 (mnhE2) from Staphylococcus epidermidis (strain ATCC 35984 / DSM 28319 / BCRC 17069 / CCUG 31568 / BM 3577 / RP62A).